The chain runs to 336 residues: tRNA N6-adenosine threonylcarbamoyltransferase (336 aa).

Fe cation-binding residues include His-114 and His-118. Substrate contacts are provided by residues 136–140 (LVSGG), Asp-169, Gly-182, Asp-186, and Asn-275. A Fe cation-binding site is contributed by Asp-301.

The protein belongs to the KAE1 / TsaD family. It depends on Fe(2+) as a cofactor.

It is found in the cytoplasm. The catalysed reaction is L-threonylcarbamoyladenylate + adenosine(37) in tRNA = N(6)-L-threonylcarbamoyladenosine(37) in tRNA + AMP + H(+). Its function is as follows. Required for the formation of a threonylcarbamoyl group on adenosine at position 37 (t(6)A37) in tRNAs that read codons beginning with adenine. Is involved in the transfer of the threonylcarbamoyl moiety of threonylcarbamoyl-AMP (TC-AMP) to the N6 group of A37, together with TsaE and TsaB. TsaD likely plays a direct catalytic role in this reaction. The chain is tRNA N6-adenosine threonylcarbamoyltransferase from Streptococcus pneumoniae serotype 2 (strain D39 / NCTC 7466).